An 85-amino-acid polypeptide reads, in one-letter code: Large ribosomal subunit protein bL27 (85 aa).

A disordered region spans residues 1 to 20 (MAHKKAGGSSRNGRDSEAKR).

The protein belongs to the bacterial ribosomal protein bL27 family.

This is Large ribosomal subunit protein bL27 from Aeromonas salmonicida (strain A449).